Here is a 538-residue protein sequence, read N- to C-terminus: Beta-1-syntrophin (538 aa).

At Ala-2 the chain carries N-acetylalanine. PH domains lie at 19 to 298 (RAQR…SNVN) and 322 to 433 (EIRH…QGCH). Phosphoserine occurs at positions 87, 126, and 205. Residues 112 to 195 (GVKVLKQELG…EVLLEVKYMR (84 aa)) enclose the PDZ domain. The tract at residues 205-237 (SPVSEIGWETPPPESPRLGGSTSDPPSSQSFSF) is disordered. Thr-214 carries the post-translational modification Phosphothreonine. Phosphoserine is present on residues Ser-219, Ser-232, Ser-236, and Ser-389. Residues 225–236 (STSDPPSSQSFS) show a composition bias toward low complexity. An SU domain is found at 482–538 (PYEKLKMSSDDGIRMLYLDFGGKDGEIQLDLHSCPKPIVFIIHSFLSAKITRLGLVA). Positions 518–538 (PIVFIIHSFLSAKITRLGLVA) are calmodulin-binding.

Belongs to the syntrophin family. In terms of assembly, monomer and homodimer. Interacts with the other members of the syntrophin family SNTA1 and SNTB2; with the sodium channel proteins SCN4A and SCN5A. Interacts with the viral HTLV-1 TAX protein and with dystrophin protein DMD and related proteins DTNA and UTRN. Interacts with DTNB. In terms of processing, phosphorylated by CaM-kinase II. Ubiquitous.

It localises to the cell membrane. The protein localises to the sarcolemma. It is found in the cell junction. Its subcellular location is the cytoplasm. The protein resides in the cytoskeleton. Functionally, adapter protein that binds to and probably organizes the subcellular localization of a variety of membrane proteins. May link various receptors to the actin cytoskeleton and the dystrophin glycoprotein complex. The protein is Beta-1-syntrophin (SNTB1) of Homo sapiens (Human).